A 187-amino-acid polypeptide reads, in one-letter code: Ribosome maturation factor RimM (187 aa).

The PRC barrel domain maps to aspartate 91–leucine 183.

The protein belongs to the RimM family. Binds ribosomal protein uS19.

It is found in the cytoplasm. An accessory protein needed during the final step in the assembly of 30S ribosomal subunit, possibly for assembly of the head region. Essential for efficient processing of 16S rRNA. May be needed both before and after RbfA during the maturation of 16S rRNA. It has affinity for free ribosomal 30S subunits but not for 70S ribosomes. In Corynebacterium jeikeium (strain K411), this protein is Ribosome maturation factor RimM.